A 221-amino-acid chain; its full sequence is Translation initiation factor 6 (221 aa).

It belongs to the eIF-6 family.

Binds to the 50S ribosomal subunit and prevents its association with the 30S ribosomal subunit to form the 70S initiation complex. This is Translation initiation factor 6 from Methanospirillum hungatei JF-1 (strain ATCC 27890 / DSM 864 / NBRC 100397 / JF-1).